Reading from the N-terminus, the 515-residue chain is MSDQVIIFDTTLRDGEQALSASLTVKEKLQIAFALERLGVDVIEAGFPISSPGDFESVRTIAKHIKNSRICALSRAVTKDIDVAADALKVAEAFRIHTFISTSTVHVQDKLRRSYDDVVEMGVKAVQRARKYTDDVEFSCEDAGRTPIDNLCRMVEAAINAGANTINIPDTVGYTIPGEFGGIIQTLFNRVPNIDKAIISVHCHDDLGMSVANSIAAVQAGARQVEGTINGIGERAGNCSLEEIAMILQTRSEYLGVHTSLKNDEIHRTSKLVSQLCNMPIQSNKAIVGANAFSHSSGIHQDGMLKNKNTYEIMTPESIGLKNKALNLTSRSGRAAVKSHMDSMGYKAEEYNLDTLYADFVKLADRKGQVFDYDLEALMHFANLRDEDDFYKLNYLSVQSGSVMATTSIKLLCGDEEKCEAAVGNGPVDALYQCIYKLTGYEIVLDKFDLTAKGEGEDGLGQADIIANYKGRKYHGTGLATDIIEASGQALLHVINSIHRADQIAEIKQNKITTV.

Residues 5 to 267 (VIIFDTTLRD…HTSLKNDEIH (263 aa)) form the Pyruvate carboxyltransferase domain. Mn(2+) is bound by residues D14, H202, H204, and N238. Positions 392–515 (KLNYLSVQSG…EIKQNKITTV (124 aa)) are regulatory domain.

This sequence belongs to the alpha-IPM synthase/homocitrate synthase family. LeuA type 1 subfamily. In terms of assembly, homodimer. Requires Mn(2+) as cofactor.

It is found in the cytoplasm. The enzyme catalyses 3-methyl-2-oxobutanoate + acetyl-CoA + H2O = (2S)-2-isopropylmalate + CoA + H(+). It functions in the pathway amino-acid biosynthesis; L-leucine biosynthesis; L-leucine from 3-methyl-2-oxobutanoate: step 1/4. Its function is as follows. Catalyzes the condensation of the acetyl group of acetyl-CoA with 3-methyl-2-oxobutanoate (2-ketoisovalerate) to form 3-carboxy-3-hydroxy-4-methylpentanoate (2-isopropylmalate). The protein is 2-isopropylmalate synthase of Aliivibrio salmonicida (strain LFI1238) (Vibrio salmonicida (strain LFI1238)).